The chain runs to 316 residues: Succinoglycan biosynthesis protein ExoV (316 aa).

Its pathway is glycan metabolism; exopolysaccharide biosynthesis. The chain is Succinoglycan biosynthesis protein ExoV (exoV) from Rhizobium meliloti (strain 1021) (Ensifer meliloti).